A 245-amino-acid chain; its full sequence is Probable phosphatase KPN78578_10290 (245 aa).

Residues H7, H9, H15, H40, E73, H101, H131, D192, and H194 each contribute to the Zn(2+) site.

Belongs to the PHP family. As to quaternary structure, homotrimer. Zn(2+) serves as cofactor.

The protein is Probable phosphatase KPN78578_10290 of Klebsiella pneumoniae subsp. pneumoniae (strain ATCC 700721 / MGH 78578).